The sequence spans 133 residues: Holo-[acyl-carrier-protein] synthase (133 aa).

Mg(2+) is bound by residues Asp8 and Glu56.

It belongs to the P-Pant transferase superfamily. AcpS family. It depends on Mg(2+) as a cofactor.

It is found in the cytoplasm. It catalyses the reaction apo-[ACP] + CoA = holo-[ACP] + adenosine 3',5'-bisphosphate + H(+). Its function is as follows. Transfers the 4'-phosphopantetheine moiety from coenzyme A to a Ser of acyl-carrier-protein. The sequence is that of Holo-[acyl-carrier-protein] synthase from Clostridium perfringens (strain ATCC 13124 / DSM 756 / JCM 1290 / NCIMB 6125 / NCTC 8237 / Type A).